The sequence spans 208 residues: GTP cyclohydrolase 1 (208 aa).

3 residues coordinate Zn(2+): Cys98, His101, and Cys169.

It belongs to the GTP cyclohydrolase I family. As to quaternary structure, toroid-shaped homodecamer, composed of two pentamers of five dimers.

It catalyses the reaction GTP + H2O = 7,8-dihydroneopterin 3'-triphosphate + formate + H(+). The protein operates within cofactor biosynthesis; 7,8-dihydroneopterin triphosphate biosynthesis; 7,8-dihydroneopterin triphosphate from GTP: step 1/1. This chain is GTP cyclohydrolase 1, found in Agrobacterium fabrum (strain C58 / ATCC 33970) (Agrobacterium tumefaciens (strain C58)).